A 188-amino-acid chain; its full sequence is Calcium load-activated calcium channel (188 aa).

The Lumenal segment spans residues 1–4 (MSTM). A helical membrane pass occupies residues 5–32 (FADTLLIVFISVCTALLAEGITWVLVYR). Residues 32 to 89 (RTDKYKRLKAEVEKQSKKLEKKKETITESAGRQQKKKIERQEEKLKNNNRDLSMVRMK) are a coiled coil. Residues 33–86 (TDKYKRLKAEVEKQSKKLEKKKETITESAGRQQKKKIERQEEKLKNNNRDLSMV) lie on the Cytoplasmic side of the membrane. Ser-60 is modified (phosphoserine). A helical membrane pass occupies residues 87 to 106 (RMKSMFAIGFCFTALMGMFN). Residues 107-120 (SIFDGRVVAKLPFT) are Lumenal-facing. Residues 121–130 (PLSYIQGLSH) lie within the membrane without spanning it. Residues 131-140 (RNLLGDDTTD) are Lumenal-facing. Residues 141–162 (CSFIFLYILCTMSIRQNIQKIL) form a helical membrane-spanning segment. At 163 to 188 (GLAPSRAATKQAGGFLGPPPPSGKFS) the chain is on the cytoplasmic side. Ser-188 is modified (phosphoserine).

The protein belongs to the TMCO1 family. As to quaternary structure, homodimer and homotetramer. Homodimer under resting conditions; forms homotetramers following ER calcium overload. Component of the GET- and EMC-like (GEL) complex, composed of RAB5IF/OPTI and TMCO1. The GEL complex is part of the multi-pass translocon (MPT) complex, composed of three subcomplexes, the GEL complex (composed of RAB5IF/OPTI and TMCO1), the BOS complex (composed of NCLN/Nicalin, NOMO1 and TMEM147) and the PAT complex (composed of WDR83OS/Asterix and CCDC47). The MPT complex associates with the SEC61 complex.

It is found in the endoplasmic reticulum membrane. Its subcellular location is the golgi apparatus membrane. It localises to the mitochondrion membrane. It carries out the reaction Ca(2+)(in) = Ca(2+)(out). In terms of biological role, endoplasmic reticulum (ER) calcium-selective channel preventing intracellular Ca2(+) stores from overfilling and maintaining calcium homeostasis in the ER. In response to endoplasmic reticulum (ER) Ca2(+) overloading, assembles into a homotetramer, forming a functional calcium-selective channel facilitating Ca2(+) release. Mediates ER Ca2(+) homeostasis in osteoblasts and plays a key role in bone formation, via the CaMKII-HDAC4-RUNX2 signaling axis. Component of the multi-pass translocon (MPT) complex that mediates insertion of multi-pass membrane proteins into the lipid bilayer of membranes. The MPT complex takes over after the SEC61 complex: following membrane insertion of the first few transmembrane segments of proteins by the SEC61 complex, the MPT complex occludes the lateral gate of the SEC61 complex to promote insertion of subsequent transmembrane regions. Within the MPT complex, the GEL subcomplex may mediate insertion of transmembrane regions into the membrane. The protein is Calcium load-activated calcium channel of Bos taurus (Bovine).